The sequence spans 524 residues: Butyrophilin subfamily 1 member A1 (524 aa).

A signal peptide spans 1-26 (MAVPTNSCLLVCLLTLTVLQLPTLDS). Residues 27 to 247 (AAPFDVTAPQ…APFVPRLTPW (221 aa)) are Extracellular-facing. 2 consecutive Ig-like V-type domains span residues 29-141 (PFDV…VYLK) and 149-235 (PQIS…VEIS). Disulfide bonds link Cys51–Cys125 and Cys165–Cys219. Asn56 and Asn216 each carry an N-linked (GlcNAc...) asparagine glycan. The helical transmembrane segment at 248–268 (IVAVAIILLALGFLTIGSIFF) threads the bilayer. Residues 269-524 (TWKLYKERSS…IPFSPSQAAP (256 aa)) are Cytoplasmic-facing. Positions 286–480 (SKERLLEELR…LTICSTANGP (195 aa)) constitute a B30.2/SPRY domain.

This sequence belongs to the immunoglobulin superfamily. BTN/MOG family. As to quaternary structure, seems to associate with xanthine dehydrogenase/oxidase. N-glycosylated. In terms of tissue distribution, strongly expressed in lactating mammary tissue (at protein level). About 100-fold lower levels in virgin mammary tissue. Also detected in spleen and thymus at 10-20 times lower levels compared to those detected in virgin mammary gland. Very low levels in several other tissues, including brain, heart, kidney, lymph node, lung and small intestine. In the thymus, detected in the stroma, in epithelial cells (at protein level). Most prominent in medullary areas of the thymus and at the corticomedullary junction (at protein level).

Its subcellular location is the membrane. May function in the secretion of milk-fat droplets. May act as a specific membrane-associated receptor for the association of cytoplasmic droplets with the apical plasma membrane. Inhibits the proliferation of CD4 and CD8 T-cells activated by anti-CD3 antibodies, T-cell metabolism and IL2 and IFNG secretion. This is Butyrophilin subfamily 1 member A1 (Btn1a1) from Mus musculus (Mouse).